The primary structure comprises 835 residues: Serine/threonine-protein kinase TNNI3K (835 aa).

A coiled-coil region spans residues 21–51 (SESYVITIERLEDDLQIKEKELTELRNIFGS). ANK repeat units lie at residues 66-96 (NGLSLLHLCCICGGKKSHIRTLMLKGLRPSR), 100-129 (NGFTALHLAVYKDNAELITSLLHSGADIQQ), 133-162 (GGLTALHIATIAGHLEAADVLLQHGANVNI), 166-195 (VFFTPLHIAAYYGHEQVTRLLLKFGADVNV), 199-228 (VGDRPLHLASAKGFLNIAKLLMEEGSKADV), 234-263 (EDHVPLHFCSRFGHHDIVKYLLQSDLEVQP), 269-298 (YGDTPLHLACYNGKFEVAKEIIQISGTESL), 304-335 (FSETAFHSACTYGKSIDLVKFLLDQNVININH), 339-368 (DGHTGLHSACYHGHIRLVQFLLDNGADMNL), and 381-410 (DEQTCLMWAYEKGHDAIVTLLKHYKRPQDE). The 261-residue stretch at 463-723 (IEFHEIIGSG…EVVMKLEECL (261 aa)) folds into the Protein kinase domain. Residues 469–477 (IGSGSFGKV) and Lys-490 each bind ATP. Asp-588 serves as the catalytic Proton acceptor. The span at 732-746 (ASSNSSGSLSPSSSS) shows a compositional bias: low complexity. The tract at residues 732-751 (ASSNSSGSLSPSSSSDCLVN) is disordered.

It belongs to the protein kinase superfamily. TKL Ser/Thr protein kinase family. MAP kinase kinase kinase subfamily. In terms of assembly, interacts with TNNI3, ACTC1, ACTA1, MYBPC3, AIP, FABP3 and HADHB. Mg(2+) serves as cofactor. Autophosphorylated. As to expression, highly expressed in both adult and fetal heart.

The protein resides in the nucleus. It localises to the cytoplasm. It catalyses the reaction L-seryl-[protein] + ATP = O-phospho-L-seryl-[protein] + ADP + H(+). The catalysed reaction is L-threonyl-[protein] + ATP = O-phospho-L-threonyl-[protein] + ADP + H(+). Its function is as follows. May play a role in cardiac physiology. The protein is Serine/threonine-protein kinase TNNI3K of Homo sapiens (Human).